The primary structure comprises 312 residues: Malate dehydrogenase (312 aa).

Residues Gly-7–Gly-13 and Asp-34 contribute to the NAD(+) site. Arg-81 and Arg-87 together coordinate substrate. NAD(+) is bound by residues Asn-94 and Ile-117–Asn-119. Residues Asn-119 and Arg-153 each coordinate substrate. The active-site Proton acceptor is the His-177. An NAD(+)-binding site is contributed by Met-227.

Belongs to the LDH/MDH superfamily. MDH type 1 family. In terms of assembly, homodimer.

The catalysed reaction is (S)-malate + NAD(+) = oxaloacetate + NADH + H(+). In terms of biological role, catalyzes the reversible oxidation of malate to oxaloacetate. The sequence is that of Malate dehydrogenase from Citrobacter koseri (strain ATCC BAA-895 / CDC 4225-83 / SGSC4696).